We begin with the raw amino-acid sequence, 240 residues long: tRNA pseudouridine synthase A (240 aa).

Asp-50 functions as the Nucleophile in the catalytic mechanism. A substrate-binding site is contributed by Tyr-109.

The protein belongs to the tRNA pseudouridine synthase TruA family. In terms of assembly, homodimer.

It carries out the reaction uridine(38/39/40) in tRNA = pseudouridine(38/39/40) in tRNA. Functionally, formation of pseudouridine at positions 38, 39 and 40 in the anticodon stem and loop of transfer RNAs. In Campylobacter jejuni subsp. jejuni serotype O:6 (strain 81116 / NCTC 11828), this protein is tRNA pseudouridine synthase A.